The following is a 93-amino-acid chain: Large ribosomal subunit protein mL41 (93 aa).

The transit peptide at M1–L13 directs the protein to the mitochondrion.

Belongs to the mitochondrion-specific ribosomal protein mL41 family. As to quaternary structure, component of the mitochondrial large ribosomal subunit (mt-LSU). Mature yeast 74S mitochondrial ribosomes consist of a small (37S) and a large (54S) subunit. The 37S small subunit contains a 15S ribosomal RNA (15S mt-rRNA) and at least 32 different proteins. The 54S large subunit contains a 21S rRNA (21S mt-rRNA) and at least 45 different proteins.

The protein localises to the mitochondrion. Component of the mitochondrial ribosome (mitoribosome), a dedicated translation machinery responsible for the synthesis of mitochondrial genome-encoded proteins, including at least some of the essential transmembrane subunits of the mitochondrial respiratory chain. The mitoribosomes are attached to the mitochondrial inner membrane and translation products are cotranslationally integrated into the membrane. The chain is Large ribosomal subunit protein mL41 (mrpl27) from Schizosaccharomyces pombe (strain 972 / ATCC 24843) (Fission yeast).